Here is a 176-residue protein sequence, read N- to C-terminus: Adenine phosphoribosyltransferase (176 aa).

It belongs to the purine/pyrimidine phosphoribosyltransferase family. Homodimer.

The protein localises to the cytoplasm. The catalysed reaction is AMP + diphosphate = 5-phospho-alpha-D-ribose 1-diphosphate + adenine. The protein operates within purine metabolism; AMP biosynthesis via salvage pathway; AMP from adenine: step 1/1. Catalyzes a salvage reaction resulting in the formation of AMP, that is energically less costly than de novo synthesis. This Thermobifida fusca (strain YX) protein is Adenine phosphoribosyltransferase.